Consider the following 238-residue polypeptide: Survival of motor neuron-related-splicing factor 30 (238 aa).

The Tudor domain occupies 72-132 (SWKVGDKCMA…KPVEEGRKAK (61 aa)). Positions 142 to 160 (KKEMIAQQREYKKKKALKK) match the Nuclear localization signal motif. Ser201 bears the Phosphoserine mark. At Lys219 the chain carries N6-acetyllysine.

This sequence belongs to the SMN family. As to quaternary structure, associates with spliceosomes. Associates with U4/U5/U6 tri-snRNP and with U2 snRNP.

The protein resides in the nucleus speckle. The protein localises to the nucleus. It is found in the cajal body. Its function is as follows. Involved in spliceosome assembly. The polypeptide is Survival of motor neuron-related-splicing factor 30 (Smndc1) (Rattus norvegicus (Rat)).